Here is a 506-residue protein sequence, read N- to C-terminus: 2-isopropylmalate synthase (506 aa).

In terms of domain architecture, Pyruvate carboxyltransferase spans 4 to 266 (ILFMDTTLRD…EPSMTLKEIK (263 aa)). The Mn(2+) site is built by Asp-13, His-201, His-203, and Asn-237. The tract at residues 390 to 506 (NITQLQVHFV…KLKSFIQLVK (117 aa)) is regulatory domain.

Belongs to the alpha-IPM synthase/homocitrate synthase family. LeuA type 1 subfamily. In terms of assembly, homodimer. Mn(2+) is required as a cofactor.

It is found in the cytoplasm. The catalysed reaction is 3-methyl-2-oxobutanoate + acetyl-CoA + H2O = (2S)-2-isopropylmalate + CoA + H(+). It participates in amino-acid biosynthesis; L-leucine biosynthesis; L-leucine from 3-methyl-2-oxobutanoate: step 1/4. Catalyzes the condensation of the acetyl group of acetyl-CoA with 3-methyl-2-oxobutanoate (2-ketoisovalerate) to form 3-carboxy-3-hydroxy-4-methylpentanoate (2-isopropylmalate). This is 2-isopropylmalate synthase from Bacillus cereus (strain ZK / E33L).